We begin with the raw amino-acid sequence, 160 residues long: Mediator of RNA polymerase II transcription subunit 31 (160 aa).

Positions 124 to 160 (GTGIENEQGGTEANNPGEAEGEQTKGTADQQDGSSKT) are disordered. The span at 147 to 160 (TKGTADQQDGSSKT) shows a compositional bias: polar residues.

Belongs to the Mediator complex subunit 31 family. Component of the Mediator complex.

It is found in the nucleus. Component of the Mediator complex, a coactivator involved in the regulated transcription of nearly all RNA polymerase II-dependent genes. Mediator functions as a bridge to convey information from gene-specific regulatory proteins to the basal RNA polymerase II transcription machinery. Mediator is recruited to promoters by direct interactions with regulatory proteins and serves as a scaffold for the assembly of a functional preinitiation complex with RNA polymerase II and the general transcription factors. This Aspergillus terreus (strain NIH 2624 / FGSC A1156) protein is Mediator of RNA polymerase II transcription subunit 31 (soh1).